A 65-amino-acid polypeptide reads, in one-letter code: Metallothionein-B (65 aa).

The protein belongs to the metallothionein superfamily. Type 4 family.

Its function is as follows. Metallothioneins have a high content of cysteine residues that bind various heavy metals. This Strongylocentrotus purpuratus (Purple sea urchin) protein is Metallothionein-B (MTB1).